Reading from the N-terminus, the 244-residue chain is Adenosylcobinamide-GDP ribazoletransferase (244 aa).

Transmembrane regions (helical) follow at residues Leu31–Leu51, Ala55–Leu75, Ile109–Val129, Gly134–Gly154, and Val188–Trp208.

This sequence belongs to the CobS family. It depends on Mg(2+) as a cofactor.

Its subcellular location is the cell inner membrane. It catalyses the reaction alpha-ribazole + adenosylcob(III)inamide-GDP = adenosylcob(III)alamin + GMP + H(+). The enzyme catalyses alpha-ribazole 5'-phosphate + adenosylcob(III)inamide-GDP = adenosylcob(III)alamin 5'-phosphate + GMP + H(+). It participates in cofactor biosynthesis; adenosylcobalamin biosynthesis; adenosylcobalamin from cob(II)yrinate a,c-diamide: step 7/7. In terms of biological role, joins adenosylcobinamide-GDP and alpha-ribazole to generate adenosylcobalamin (Ado-cobalamin). Also synthesizes adenosylcobalamin 5'-phosphate from adenosylcobinamide-GDP and alpha-ribazole 5'-phosphate. This is Adenosylcobinamide-GDP ribazoletransferase from Pseudomonas entomophila (strain L48).